We begin with the raw amino-acid sequence, 205 residues long: Cytochrome c biogenesis ATP-binding export protein CcmA (205 aa).

The 203-residue stretch at 2-204 (LEVSNLTAIR…SPKLRKIKLG (203 aa)) folds into the ABC transporter domain. 34 to 41 (GRNGTGKT) serves as a coordination point for ATP.

It belongs to the ABC transporter superfamily. CcmA exporter (TC 3.A.1.107) family. The complex is composed of two ATP-binding proteins (CcmA) and two transmembrane proteins (CcmB).

It localises to the cell inner membrane. It carries out the reaction heme b(in) + ATP + H2O = heme b(out) + ADP + phosphate + H(+). Part of the ABC transporter complex CcmAB involved in the biogenesis of c-type cytochromes; once thought to export heme, this seems not to be the case, but its exact role is uncertain. Responsible for energy coupling to the transport system. The sequence is that of Cytochrome c biogenesis ATP-binding export protein CcmA from Vibrio vulnificus (strain CMCP6).